The following is a 263-amino-acid chain: MICARIRPLISSPLAFTISTTKHSRINLRLLPRRSFSVMSSSTPQSQIIEHIVLFKTKDDADSTKITSMINNLNALAYLDQVLHISTSPLHRISSATAFTHVLHSRYESKEDLASYAAHPDHVRVVKESVLPICDDIMAVDWIADRIPGTVAPLPGSVAKLTLLKLKEDVADEAKSEITGVIKGLSEKFPGIDQITVGENFSPARAKGFSIASIAYFKDLSEMEAVDAQKELVNSQKDKVRDYVDSTIVVEFVVPSSSQSSSL.

Stress-response A/B barrel domains are found at residues 49 to 142 (IEHI…AVDW) and 158 to 252 (VAKL…VVEF). A Peroxisomal targeting signal motif is present at residues 261–263 (SSL).

In terms of assembly, homodimer.

It localises to the peroxisome. Its function is as follows. Involved in stress response. The polypeptide is Stress-response A/B barrel domain-containing protein UP3 (Arabidopsis thaliana (Mouse-ear cress)).